Consider the following 409-residue polypeptide: Glucan endo-1,6-beta-glucosidase B (409 aa).

Residues 1-16 form the signal peptide; sequence MKFILPLFTSLPVALA. Asn35 carries an N-linked (GlcNAc...) asparagine glycan. Glu228 (proton donor) is an active-site residue. Residue Glu330 is the Nucleophile of the active site.

Belongs to the glycosyl hydrolase 5 (cellulase A) family.

Its subcellular location is the secreted. It carries out the reaction Random hydrolysis of (1-&gt;6)-linkages in (1-&gt;6)-beta-D-glucans.. Its function is as follows. Beta-glucanases participate in the metabolism of beta-glucan, the main structural component of the cell wall. Acts on lutean, pustulan and 1,6-oligo-beta-D-glucosides. This chain is Glucan endo-1,6-beta-glucosidase B (exgB), found in Emericella nidulans (strain FGSC A4 / ATCC 38163 / CBS 112.46 / NRRL 194 / M139) (Aspergillus nidulans).